The following is a 120-amino-acid chain: Chemokine vCXCL1 (120 aa).

It belongs to the intercrine alpha (chemokine CxC) family. As to quaternary structure, interacts with host CXCR1 and CXCR2.

Functionally, acts as a functional chemokine, inducing calcium mobilization, chemotaxis, and degranulation of neutrophils. Contributes to the induction of neutrophil chemotaxis by interacting with host CXCR1 and CXCR2 receptors. The protein is Chemokine vCXCL1 (UL146) of Human cytomegalovirus (strain Merlin) (HHV-5).